A 312-amino-acid chain; its full sequence is Malate dehydrogenase (312 aa).

NAD(+) is bound by residues 12–17 (GAGFTG) and Asp36. Arg87 and Arg93 together coordinate substrate. NAD(+) contacts are provided by residues Asn100 and 123–125 (LTN). Asn125 is a binding site for substrate. Ser149 is modified (phosphoserine). Arg156 is a binding site for substrate. Catalysis depends on His180, which acts as the Proton acceptor.

The protein belongs to the LDH/MDH superfamily. MDH type 3 family.

The catalysed reaction is (S)-malate + NAD(+) = oxaloacetate + NADH + H(+). Its function is as follows. Catalyzes the reversible oxidation of malate to oxaloacetate. This chain is Malate dehydrogenase, found in Anoxybacillus flavithermus (strain DSM 21510 / WK1).